Here is a 557-residue protein sequence, read N- to C-terminus: CTP synthase (557 aa).

Residues 1–270 (MTKYVFVTGG…DAIICEELKL (270 aa)) are amidoligase domain. Serine 13 serves as a coordination point for CTP. Serine 13 contacts UTP. ATP-binding positions include 14–19 (SLGKGI) and aspartate 71. Mg(2+) is bound by residues aspartate 71 and glutamate 144. CTP-binding positions include 151–153 (DIE), 191–196 (KTKPTQ), and lysine 227. Residues 191-196 (KTKPTQ) and lysine 227 each bind UTP. The 253-residue stretch at 295-547 (TIGMVGKYVD…VEAALAHQQS (253 aa)) folds into the Glutamine amidotransferase type-1 domain. L-glutamine is bound at residue glycine 356. Cysteine 383 serves as the catalytic Nucleophile; for glutamine hydrolysis. Residues 384–387 (LGMQ), glutamate 407, and arginine 473 contribute to the L-glutamine site. Active-site residues include histidine 520 and glutamate 522.

It belongs to the CTP synthase family. In terms of assembly, homotetramer.

It carries out the reaction UTP + L-glutamine + ATP + H2O = CTP + L-glutamate + ADP + phosphate + 2 H(+). The catalysed reaction is L-glutamine + H2O = L-glutamate + NH4(+). The enzyme catalyses UTP + NH4(+) + ATP = CTP + ADP + phosphate + 2 H(+). The protein operates within pyrimidine metabolism; CTP biosynthesis via de novo pathway; CTP from UDP: step 2/2. Allosterically activated by GTP, when glutamine is the substrate; GTP has no effect on the reaction when ammonia is the substrate. The allosteric effector GTP functions by stabilizing the protein conformation that binds the tetrahedral intermediate(s) formed during glutamine hydrolysis. Inhibited by the product CTP, via allosteric rather than competitive inhibition. In terms of biological role, catalyzes the ATP-dependent amination of UTP to CTP with either L-glutamine or ammonia as the source of nitrogen. Regulates intracellular CTP levels through interactions with the four ribonucleotide triphosphates. The sequence is that of CTP synthase from Paraburkholderia xenovorans (strain LB400).